The sequence spans 479 residues: BURP domain-containing protein 4 (479 aa).

The N-terminal stretch at Met1–Ala46 is a signal peptide. The disordered stretch occupies residues Arg158–Lys177. In terms of domain architecture, BURP spans Leu254–Asn479. Asn445 carries an N-linked (GlcNAc...) asparagine glycan.

As to expression, expressed in stamen.

The sequence is that of BURP domain-containing protein 4 (BURP4) from Oryza sativa subsp. japonica (Rice).